Consider the following 316-residue polypeptide: Cyclin-dependent kinase inhibitor 1C (316 aa).

Arg-107 is modified (omega-N-methylarginine). A disordered region spans residues 124–153 (ESLDGLEEAPEQLPSVPVPAPASTPPPVPV). The segment covering 139–153 (VPVPAPASTPPPVPV) has biased composition (pro residues). Tandem repeats lie at residues 156–159 (PAPA), 160–163 (PAPA), 180–183 (PAPA), 184–187 (PAPA), 188–191 (PAPA), 198–201 (PAPA), 202–205 (PAPA), 206–209 (PAPA), and 210–213 (PAPA). Residues 156–213 (PAPAPAPAPVAAPVAAPVAVAVLAPAPAPAPAPAPAPAPVAAPAPAPAPAPAPAPAPA) are 9 X 4 AA repeats of P-A-P-A. Residues 181–217 (APAPAPAPAPAPAPVAAPAPAPAPAPAPAPAPAPAPD) are compositionally biased toward pro residues. The interval 181 to 260 (APAPAPAPAP…AAGTAAASAN (80 aa)) is disordered. Positions 223–233 (SAEQGANQGQR) are enriched in polar residues. Residues 251 to 260 (AAGTAAASAN) show a composition bias toward low complexity. Residue Ser-268 is modified to Phosphoserine. A Nuclear localization signal motif is present at residues 278–281 (KRKR). The interval 278-316 (KRKRSAPEKSSGDVPAPCPSPSAAPGVGSVEQTPRKRLR) is disordered.

This sequence belongs to the CDI family. As to quaternary structure, interacts with PCNA. As to expression, expressed in the heart, brain, lung, skeletal muscle, kidney, pancreas and testis. Expressed in the eye. High levels are seen in the placenta while low levels are seen in the liver.

Its subcellular location is the nucleus. Functionally, potent tight-binding inhibitor of several G1 cyclin/CDK complexes (cyclin E-CDK2, cyclin D2-CDK4, and cyclin A-CDK2) and, to lesser extent, of the mitotic cyclin B-CDC2. Negative regulator of cell proliferation. May play a role in maintenance of the non-proliferative state throughout life. The polypeptide is Cyclin-dependent kinase inhibitor 1C (CDKN1C) (Homo sapiens (Human)).